We begin with the raw amino-acid sequence, 198 residues long: Dephospho-CoA kinase (198 aa).

A DPCK domain is found at 4-198; it reads FLGLTGGIAS…LSDLLQEIGR (195 aa). 12–17 is an ATP binding site; sequence ASGKST.

Belongs to the CoaE family.

It localises to the cytoplasm. It catalyses the reaction 3'-dephospho-CoA + ATP = ADP + CoA + H(+). It participates in cofactor biosynthesis; coenzyme A biosynthesis; CoA from (R)-pantothenate: step 5/5. Catalyzes the phosphorylation of the 3'-hydroxyl group of dephosphocoenzyme A to form coenzyme A. This is Dephospho-CoA kinase from Lactobacillus johnsonii (strain CNCM I-12250 / La1 / NCC 533).